Reading from the N-terminus, the 201-residue chain is Small ribosomal subunit protein uS4 (201 aa).

The S4 RNA-binding domain maps to Arg92–Val155.

The protein belongs to the universal ribosomal protein uS4 family. In terms of assembly, part of the 30S ribosomal subunit. Contacts protein S5. The interaction surface between S4 and S5 is involved in control of translational fidelity.

One of the primary rRNA binding proteins, it binds directly to 16S rRNA where it nucleates assembly of the body of the 30S subunit. Its function is as follows. With S5 and S12 plays an important role in translational accuracy. This chain is Small ribosomal subunit protein uS4, found in Staphylococcus carnosus (strain TM300).